A 93-amino-acid chain; its full sequence is Small ribosomal subunit protein uS19c (93 aa).

Belongs to the universal ribosomal protein uS19 family.

The protein resides in the plastid. Its subcellular location is the chloroplast. Its function is as follows. Protein S19 forms a complex with S13 that binds strongly to the 16S ribosomal RNA. The protein is Small ribosomal subunit protein uS19c of Tetradesmus obliquus (Green alga).